The following is a 324-amino-acid chain: ATP-dependent 6-phosphofructokinase (324 aa).

G15 is an ATP binding site. 25-29 (RGVVR) lines the ADP pocket. ATP contacts are provided by residues 76–77 (RF) and 106–109 (GDGS). Mg(2+) is bound at residue D107. Position 130–132 (130–132 (TID)) interacts with substrate. D132 (proton acceptor) is an active-site residue. R159 is an ADP binding site. Residues R167 and 174–176 (MGR) contribute to the substrate site. ADP is bound by residues 190–192 (GCE), K216, and 218–220 (KRH). Residues E227, R248, and 254–257 (HIQR) contribute to the substrate site.

This sequence belongs to the phosphofructokinase type A (PFKA) family. ATP-dependent PFK group I subfamily. Prokaryotic clade 'B1' sub-subfamily. As to quaternary structure, homotetramer. Requires Mg(2+) as cofactor.

The protein resides in the cytoplasm. The enzyme catalyses beta-D-fructose 6-phosphate + ATP = beta-D-fructose 1,6-bisphosphate + ADP + H(+). Its pathway is carbohydrate degradation; glycolysis; D-glyceraldehyde 3-phosphate and glycerone phosphate from D-glucose: step 3/4. Allosterically activated by ADP and other diphosphonucleosides, and allosterically inhibited by phosphoenolpyruvate. Catalyzes the phosphorylation of D-fructose 6-phosphate to fructose 1,6-bisphosphate by ATP, the first committing step of glycolysis. In Actinobacillus pleuropneumoniae serotype 5b (strain L20), this protein is ATP-dependent 6-phosphofructokinase.